Reading from the N-terminus, the 233-residue chain is Sugar fermentation stimulation protein homolog (233 aa).

Belongs to the SfsA family.

This is Sugar fermentation stimulation protein homolog from Acetivibrio thermocellus (strain ATCC 27405 / DSM 1237 / JCM 9322 / NBRC 103400 / NCIMB 10682 / NRRL B-4536 / VPI 7372) (Clostridium thermocellum).